The chain runs to 120 residues: Spermidine export protein MdtJ (120 aa).

4 helical membrane passes run 1–21 (MFYW…TLSM), 31–51 (AGFI…SFAV), 54–74 (IALG…ITIF), and 81–101 (EALS…IVLI).

The protein belongs to the drug/metabolite transporter (DMT) superfamily. Small multidrug resistance (SMR) (TC 2.A.7.1) family. MdtJ subfamily. In terms of assembly, forms a complex with MdtI.

The protein localises to the cell inner membrane. Catalyzes the excretion of spermidine. The chain is Spermidine export protein MdtJ from Salmonella choleraesuis (strain SC-B67).